The following is a 361-amino-acid chain: Protein RecA (361 aa).

ATP is bound at residue 77-84 (GPESSGKT).

It belongs to the RecA family.

It localises to the cytoplasm. Functionally, can catalyze the hydrolysis of ATP in the presence of single-stranded DNA, the ATP-dependent uptake of single-stranded DNA by duplex DNA, and the ATP-dependent hybridization of homologous single-stranded DNAs. It interacts with LexA causing its activation and leading to its autocatalytic cleavage. This is Protein RecA from Sinorhizobium medicae (strain WSM419) (Ensifer medicae).